Reading from the N-terminus, the 470-residue chain is Cysteine--tRNA ligase (470 aa).

Zn(2+) is bound at residue cysteine 31. The 'HIGH' region motif lies at 33-43 (PTVYDYVHIGH). The Zn(2+) site is built by cysteine 209, histidine 234, and glutamate 238. The 'KMSKS' region signature appears at 266–270 (KMSKS). Lysine 269 provides a ligand contact to ATP.

The protein belongs to the class-I aminoacyl-tRNA synthetase family. Requires Zn(2+) as cofactor.

It localises to the cytoplasm. The catalysed reaction is tRNA(Cys) + L-cysteine + ATP = L-cysteinyl-tRNA(Cys) + AMP + diphosphate. The protein is Cysteine--tRNA ligase of Saccharolobus solfataricus (strain ATCC 35092 / DSM 1617 / JCM 11322 / P2) (Sulfolobus solfataricus).